The primary structure comprises 170 residues: Peptidyl-prolyl cis-trans isomerase ESS1 (170 aa).

Residues 9 to 43 enclose the WW domain; that stretch reads TGLPTPWTVRYSKSKKREYFFNPETKHSQWEEPEG. Residues 30 to 53 form a disordered region; the sequence is NPETKHSQWEEPEGTNKDQLHKHL. The span at 32–53 shows a compositional bias: basic and acidic residues; sequence ETKHSQWEEPEGTNKDQLHKHL. Residues 57–170 form the PpiC domain; the sequence is PVRVRCLHIL…SGVHVIKRVG (114 aa). Position 161 is a phosphoserine (Ser161).

The protein belongs to the PpiC/parvulin rotamase family. Interacts with the RNA polymerase II largest subunit (RPB1) and with the SIN1-RDP3 HDAC subunit SIN3.

It localises to the cytoplasm. The protein localises to the nucleus. It catalyses the reaction [protein]-peptidylproline (omega=180) = [protein]-peptidylproline (omega=0). Inhibited by 5-hydroxy-1,4-naphthoquinone (juglone), but not by FK506 or cyclosporin A. Essential PPIase specific for phosphoserine and phosphothreonine N-terminal to the proline residue. Required for efficient pre-mRNA 3'-end processing and transcription termination, probably by inducing conformational changes by proline-directed isomerization in the C-terminal domain (CTD) of RPB1, thereby altering cofactor binding with the RNA polymerase II transcription complex. Also targets the SIN3-RPD3 histone deacetylase complex (HDAC). The sequence is that of Peptidyl-prolyl cis-trans isomerase ESS1 (ESS1) from Saccharomyces cerevisiae (strain ATCC 204508 / S288c) (Baker's yeast).